Reading from the N-terminus, the 433-residue chain is Histidine--tRNA ligase (433 aa).

The protein belongs to the class-II aminoacyl-tRNA synthetase family. In terms of assembly, homodimer.

It is found in the cytoplasm. It catalyses the reaction tRNA(His) + L-histidine + ATP = L-histidyl-tRNA(His) + AMP + diphosphate + H(+). This Crocosphaera subtropica (strain ATCC 51142 / BH68) (Cyanothece sp. (strain ATCC 51142)) protein is Histidine--tRNA ligase.